A 981-amino-acid chain; its full sequence is Little elongation complex subunit 2 (981 aa).

A phosphoserine mark is found at S17 and S326. Disordered regions lie at residues 406 to 427 (FGAT…TVAP) and 475 to 516 (IDSG…SDPL). Residues 408-424 (ATTTKPSKSPSPASTST) are compositionally biased toward low complexity. The segment covering 480 to 489 (EESKNKDDQR) has biased composition (basic and acidic residues). S573 bears the Phosphoserine mark. A Phosphothreonine modification is found at T575. Disordered stretches follow at residues 591-627 (HGKT…TCPE), 669-690 (LMNS…PSDA), and 930-981 (PPKS…RKIT). Positions 599–624 (SNLSSKPASLNSSSGQTSTGNQTNST) are enriched in low complexity. Composition is skewed to polar residues over residues 671 to 686 (NSEN…QPSA) and 954 to 969 (NSVS…QQVE).

It belongs to the ICE2 family. Component of the little elongation complex (LEC), at least composed of ELL (ELL, ELL2 or ELL3), ZC3H8, ICE1 and ICE2. Interacts with ICE1 (via C-terminus domain). Interacts with ELL.

The protein resides in the nucleus. Its function is as follows. Component of the little elongation complex (LEC), a complex required to regulate small nuclear RNA (snRNA) gene transcription by RNA polymerase II and III. In Bos taurus (Bovine), this protein is Little elongation complex subunit 2 (ICE2).